The primary structure comprises 594 residues: Choline dehydrogenase, mitochondrial (594 aa).

The N-terminal 29 residues, 1 to 29 (MWCLLRGLGRPGALARGALGQQQSLGARA), are a transit peptide targeting the mitochondrion. 42 to 71 (SYVVVGAGSAGCVLAGRLTEDPAERVLLLE) contributes to the FAD binding site. At K436 the chain carries N6-succinyllysine. 2 positions are modified to N6-acetyllysine; alternate: K484 and K496. K484 and K496 each carry N6-succinyllysine; alternate. Catalysis depends on H511, which acts as the Proton acceptor. The residue at position 580 (K580) is an N6-acetyllysine.

It belongs to the GMC oxidoreductase family. It depends on FAD as a cofactor.

The protein resides in the mitochondrion inner membrane. It catalyses the reaction choline + A = betaine aldehyde + AH2. Its pathway is amine and polyamine biosynthesis; betaine biosynthesis via choline pathway; betaine aldehyde from choline (cytochrome c reductase route): step 1/1. In Homo sapiens (Human), this protein is Choline dehydrogenase, mitochondrial (CHDH).